A 462-amino-acid polypeptide reads, in one-letter code: Chromosomal replication initiator protein DnaA (462 aa).

Positions 1–84 (MAVSLWQQCI…RFDIGSRPSA (84 aa)) are domain I, interacts with DnaA modulators. Residues 84–125 (ARTVQPAPAAPRPTTGHTQTKARVGTAFNIQAEPMANANHRS) form a domain II region. The interval 126–342 (NINPTYQFDN…GALNRVIANA (217 aa)) is domain III, AAA+ region. ATP-binding residues include Gly-170, Gly-172, Lys-173, and Thr-174. A domain IV, binds dsDNA region spans residues 343-462 (NFTGRPITID…YANLIRTLSS (120 aa)).

Belongs to the DnaA family. In terms of assembly, oligomerizes as a right-handed, spiral filament on DNA at oriC.

It is found in the cytoplasm. Functionally, plays an essential role in the initiation and regulation of chromosomal replication. ATP-DnaA binds to the origin of replication (oriC) to initiate formation of the DNA replication initiation complex once per cell cycle. Binds the DnaA box (a 9 base pair repeat at the origin) and separates the double-stranded (ds)DNA. Forms a right-handed helical filament on oriC DNA; dsDNA binds to the exterior of the filament while single-stranded (ss)DNA is stabiized in the filament's interior. The ATP-DnaA-oriC complex binds and stabilizes one strand of the AT-rich DNA unwinding element (DUE), permitting loading of DNA polymerase. After initiation quickly degrades to an ADP-DnaA complex that is not apt for DNA replication. Binds acidic phospholipids. The protein is Chromosomal replication initiator protein DnaA of Shewanella denitrificans (strain OS217 / ATCC BAA-1090 / DSM 15013).